The following is a 515-amino-acid chain: Tetratricopeptide repeat protein 8 (515 aa).

One copy of the TPR 1 repeat lies at 4 to 37 (EMEPLLRAWSYFRRRKFQLCADLCTQMLEKSPYD). 2 disordered regions span residues 89 to 109 (RPGT…TQAV) and 118 to 137 (PITG…TMEQ). TPR repeat units lie at residues 225 to 258 (WWWK…QEMV), 259 to 291 (DTFL…FPGE), 292 to 325 (VTLL…DNTH), 326 to 359 (VEAI…GVYN), 360 to 393 (CQLF…AENE), 397 to 430 (ADVW…NNHH), and 432 to 464 (EAYN…APHM).

In terms of assembly, part of BBSome complex, that contains BBS1, BBS2, BBS4, BBS5, BBS7, BBS8/TTC8, BBS9 and BBIP10. Interacts with PCM1. Interacts with CCDC28B. Interacts with PKD1. In terms of tissue distribution, isoform 1 is retina-specific whereas isoform 2 is ubiquitously expressed.

The protein resides in the cytoplasm. Its subcellular location is the cytoskeleton. It localises to the microtubule organizing center. The protein localises to the centrosome. It is found in the centriole. The protein resides in the cell projection. Its subcellular location is the cilium membrane. It localises to the centriolar satellite. The protein localises to the cilium. In terms of biological role, the BBSome complex is thought to function as a coat complex required for sorting of specific membrane proteins to the primary cilia. The BBSome complex is required for ciliogenesis but is dispensable for centriolar satellite function. This ciliogenic function is mediated in part by the Rab8 GDP/GTP exchange factor, which localizes to the basal body and contacts the BBSome. Rab8(GTP) enters the primary cilium and promotes extension of the ciliary membrane. Firstly the BBSome associates with the ciliary membrane and binds to RAB3IP/Rabin8, the guanosyl exchange factor (GEF) for Rab8 and then the Rab8-GTP localizes to the cilium and promotes docking and fusion of carrier vesicles to the base of the ciliary membrane. The BBSome complex, together with the LTZL1, controls SMO ciliary trafficking and contributes to the sonic hedgehog (SHH) pathway regulation. Required for proper BBSome complex assembly and its ciliary localization. In Mus musculus (Mouse), this protein is Tetratricopeptide repeat protein 8 (Ttc8).